The following is a 31-amino-acid chain: Cytochrome b6-f complex subunit 6 (31 aa).

The helical transmembrane segment at Ala-3–Phe-23 threads the bilayer.

The protein belongs to the PetL family. In terms of assembly, the 4 large subunits of the cytochrome b6-f complex are cytochrome b6, subunit IV (17 kDa polypeptide, PetD), cytochrome f and the Rieske protein, while the 4 small subunits are PetG, PetL, PetM and PetN. The complex functions as a dimer.

The protein localises to the plastid. It localises to the chloroplast thylakoid membrane. Functionally, component of the cytochrome b6-f complex, which mediates electron transfer between photosystem II (PSII) and photosystem I (PSI), cyclic electron flow around PSI, and state transitions. PetL is important for photoautotrophic growth as well as for electron transfer efficiency and stability of the cytochrome b6-f complex. The chain is Cytochrome b6-f complex subunit 6 from Emiliania huxleyi (Coccolithophore).